The chain runs to 157 residues: S-ribosylhomocysteine lyase 2 (157 aa).

His54, His58, and Cys124 together coordinate Fe cation.

This sequence belongs to the LuxS family. In terms of assembly, homodimer. It depends on Fe cation as a cofactor.

It catalyses the reaction S-(5-deoxy-D-ribos-5-yl)-L-homocysteine = (S)-4,5-dihydroxypentane-2,3-dione + L-homocysteine. Functionally, involved in the synthesis of autoinducer 2 (AI-2) which is secreted by bacteria and is used to communicate both the cell density and the metabolic potential of the environment. The regulation of gene expression in response to changes in cell density is called quorum sensing. Catalyzes the transformation of S-ribosylhomocysteine (RHC) to homocysteine (HC) and 4,5-dihydroxy-2,3-pentadione (DPD). This Lactobacillus delbrueckii subsp. bulgaricus (strain ATCC BAA-365 / Lb-18) protein is S-ribosylhomocysteine lyase 2.